Reading from the N-terminus, the 436-residue chain is MTTNLFSSRIIQSALDFDVYKVNMMSAVAALYPDAMVSYKFIVRSEEDLSELLPEVKAEVLKLQDITFSTEEIEYIKGVAPYLNPEFVDALHAFRFNPQRDVSFNIKTMADGTSQLRITINGLWKETILYETIIMSIVSEVRSRARWAEVPVEQFQSVLEEKVRHLKTELKRRNITNFKFADMSTRRRFSFQAQRSMLKYLSKELPDCLTGTSNYHLAKELGLTPIGTVAHEWFMGHQALVNVRDSQKVALQRWQKMFNGALGIALTDTIGIDAFLKDFDEELSNAYVGVRHDSGCPYTWGEKMIEHYQSLGIDPMTKTLVFTDGLNFEQALAICEHFQDRVQVSFGIGTSLANDMGDYANAQGIAYKPLSIVIKMVSCNGSPVAKISDEPEKAMCEDIFFLMNLKRRFEQPLDLDECRGLIDRLEDEGDNYLIDA.

His231 is modified (phosphohistidine; by autocatalysis).

The protein belongs to the NAPRTase family. In terms of processing, transiently phosphorylated on a His residue during the reaction cycle. Phosphorylation strongly increases the affinity for substrates and increases the rate of nicotinate D-ribonucleotide production. Dephosphorylation regenerates the low-affinity form of the enzyme, leading to product release.

It carries out the reaction nicotinate + 5-phospho-alpha-D-ribose 1-diphosphate + ATP + H2O = nicotinate beta-D-ribonucleotide + ADP + phosphate + diphosphate. It functions in the pathway cofactor biosynthesis; NAD(+) biosynthesis; nicotinate D-ribonucleotide from nicotinate: step 1/1. Functionally, catalyzes the synthesis of beta-nicotinate D-ribonucleotide from nicotinate and 5-phospho-D-ribose 1-phosphate at the expense of ATP. In Vibrio campbellii (strain ATCC BAA-1116), this protein is Nicotinate phosphoribosyltransferase.